The following is a 283-amino-acid chain: Elongation factor Ts (283 aa).

An involved in Mg(2+) ion dislocation from EF-Tu region spans residues 80–83 (TDFV).

Belongs to the EF-Ts family.

The protein localises to the cytoplasm. Its function is as follows. Associates with the EF-Tu.GDP complex and induces the exchange of GDP to GTP. It remains bound to the aminoacyl-tRNA.EF-Tu.GTP complex up to the GTP hydrolysis stage on the ribosome. The chain is Elongation factor Ts from Actinobacillus pleuropneumoniae serotype 3 (strain JL03).